Here is a 565-residue protein sequence, read N- to C-terminus: Membrane protein insertase YidC (565 aa).

6 helical membrane passes run 6-26, 348-368, 370-390, 437-457, 479-499, and 516-536; these read VLLI…WGKN, LMAL…SLLH, WGWA…PLSA, GGCF…WVLV, PYFI…KLTP, and PLIF…YWVI.

It belongs to the OXA1/ALB3/YidC family. Type 1 subfamily. As to quaternary structure, interacts with the Sec translocase complex via SecD. Specifically interacts with transmembrane segments of nascent integral membrane proteins during membrane integration.

It localises to the cell inner membrane. Required for the insertion and/or proper folding and/or complex formation of integral membrane proteins into the membrane. Involved in integration of membrane proteins that insert both dependently and independently of the Sec translocase complex, as well as at least some lipoproteins. Aids folding of multispanning membrane proteins. This chain is Membrane protein insertase YidC, found in Xylella fastidiosa (strain M12).